The following is a 719-amino-acid chain: Putative ankyrin repeat protein RBE_0319 (719 aa).

ANK repeat units lie at residues V377–S406, T408–E438, N442–K472, Y476–Q506, Y510–E540, L544–Q572, D576–E605, H609–E639, and Q642–K672.

This chain is Putative ankyrin repeat protein RBE_0319, found in Rickettsia bellii (strain RML369-C).